The following is a 169-amino-acid chain: Lipoprotein signal peptidase (169 aa).

4 helical membrane passes run 4–24, 42–62, 70–90, and 102–122; these read PICS…IVDL, LIPF…SFLA, WFFA…MYRS, and ALII…GAVI. Catalysis depends on residues Asp123 and Asp141. A helical transmembrane segment spans residues 137-157; that stretch reads FNIADTAICIGAALVIFEGFI.

The protein belongs to the peptidase A8 family.

Its subcellular location is the cell inner membrane. It catalyses the reaction Release of signal peptides from bacterial membrane prolipoproteins. Hydrolyzes -Xaa-Yaa-Zaa-|-(S,diacylglyceryl)Cys-, in which Xaa is hydrophobic (preferably Leu), and Yaa (Ala or Ser) and Zaa (Gly or Ala) have small, neutral side chains.. The protein operates within protein modification; lipoprotein biosynthesis (signal peptide cleavage). Its function is as follows. This protein specifically catalyzes the removal of signal peptides from prolipoproteins. This Yersinia enterocolitica serotype O:8 / biotype 1B (strain NCTC 13174 / 8081) protein is Lipoprotein signal peptidase.